Here is a 261-residue protein sequence, read N- to C-terminus: Leucyl/phenylalanyl-tRNA--protein transferase (261 aa).

Belongs to the L/F-transferase family.

The protein localises to the cytoplasm. The catalysed reaction is N-terminal L-lysyl-[protein] + L-leucyl-tRNA(Leu) = N-terminal L-leucyl-L-lysyl-[protein] + tRNA(Leu) + H(+). It catalyses the reaction N-terminal L-arginyl-[protein] + L-leucyl-tRNA(Leu) = N-terminal L-leucyl-L-arginyl-[protein] + tRNA(Leu) + H(+). It carries out the reaction L-phenylalanyl-tRNA(Phe) + an N-terminal L-alpha-aminoacyl-[protein] = an N-terminal L-phenylalanyl-L-alpha-aminoacyl-[protein] + tRNA(Phe). Its function is as follows. Functions in the N-end rule pathway of protein degradation where it conjugates Leu, Phe and, less efficiently, Met from aminoacyl-tRNAs to the N-termini of proteins containing an N-terminal arginine or lysine. The sequence is that of Leucyl/phenylalanyl-tRNA--protein transferase from Yersinia pestis bv. Antiqua (strain Antiqua).